The sequence spans 203 residues: NADH-quinone oxidoreductase subunit C (203 aa).

This sequence belongs to the complex I 30 kDa subunit family. NDH-1 is composed of 14 different subunits. Subunits NuoB, C, D, E, F, and G constitute the peripheral sector of the complex.

The protein localises to the cell inner membrane. It carries out the reaction a quinone + NADH + 5 H(+)(in) = a quinol + NAD(+) + 4 H(+)(out). In terms of biological role, NDH-1 shuttles electrons from NADH, via FMN and iron-sulfur (Fe-S) centers, to quinones in the respiratory chain. The immediate electron acceptor for the enzyme in this species is believed to be ubiquinone. Couples the redox reaction to proton translocation (for every two electrons transferred, four hydrogen ions are translocated across the cytoplasmic membrane), and thus conserves the redox energy in a proton gradient. The sequence is that of NADH-quinone oxidoreductase subunit C from Polaromonas sp. (strain JS666 / ATCC BAA-500).